A 315-amino-acid chain; its full sequence is ATP synthase gamma chain (315 aa).

Belongs to the ATPase gamma chain family. As to quaternary structure, F-type ATPases have 2 components, CF(1) - the catalytic core - and CF(0) - the membrane proton channel. CF(1) has five subunits: alpha(3), beta(3), gamma(1), delta(1), epsilon(1). CF(0) has three main subunits: a, b and c.

It localises to the cellular thylakoid membrane. In terms of biological role, produces ATP from ADP in the presence of a proton gradient across the membrane. The gamma chain is believed to be important in regulating ATPase activity and the flow of protons through the CF(0) complex. This chain is ATP synthase gamma chain, found in Microcystis aeruginosa (strain NIES-843 / IAM M-2473).